A 237-amino-acid polypeptide reads, in one-letter code: Ribose-5-phosphate isomerase A (237 aa).

Substrate contacts are provided by residues 33–36 (TGST), 88–91 (DGAD), and 101–104 (KGRG). Catalysis depends on glutamate 110, which acts as the Proton acceptor. Lysine 128 is a substrate binding site.

It belongs to the ribose 5-phosphate isomerase family. Homodimer.

The catalysed reaction is aldehydo-D-ribose 5-phosphate = D-ribulose 5-phosphate. The protein operates within carbohydrate degradation; pentose phosphate pathway; D-ribose 5-phosphate from D-ribulose 5-phosphate (non-oxidative stage): step 1/1. In terms of biological role, catalyzes the reversible conversion of ribose-5-phosphate to ribulose 5-phosphate. This is Ribose-5-phosphate isomerase A from Methanoregula boonei (strain DSM 21154 / JCM 14090 / 6A8).